Reading from the N-terminus, the 505-residue chain is Activin receptor type-1B (505 aa).

The N-terminal stretch at 1–23 is a signal peptide; the sequence is MAESAGASSFFPLVVLLLAGSGG. The Extracellular segment spans residues 24-126; the sequence is SGPRGVQALL…EHPSMWGPVE (103 aa). A glycan (N-linked (GlcNAc...) asparagine) is linked at Asn43. Residues 127 to 149 traverse the membrane as a helical segment; sequence LVGIIAGPVFLLFLIIIIVFLVI. Residues 150-505 lie on the Cytoplasmic side of the membrane; that stretch reads NYHQRVYHNR…QLSVQEDVKI (356 aa). The GS domain occupies 177–206; the sequence is KTLQDLVYDLSTSGSGSGLPLFVQRTVART. The region spanning 207 to 497 is the Protein kinase domain; it reads IVLQEIIGKG…LRIKKTLSQL (291 aa). ATP-binding positions include 213–221 and Lys234; that span reads IGKGRFGEV. Asp335 serves as the catalytic Proton acceptor. At Tyr380 the chain carries Phosphotyrosine.

It belongs to the protein kinase superfamily. TKL Ser/Thr protein kinase family. TGFB receptor subfamily. As to quaternary structure, forms an activin receptor complex with activin receptor type-2 (ACVR2A or ACVR2B). Part of a complex consisting of MAGI2/ARIP1, ACVR2A, ACVR1B and SMAD3. Interacts with SMAD2 and SMAD3. Interacts with SMAD7. Interacts with FKBP1A. Interacts with IGSF1. Interacts with CRIPTO. Interacts with TDP2. Interacts with TSC22D1/TSC-22. Mg(2+) serves as cofactor. The cofactor is Mn(2+). Autophosphorylated. Phosphorylated by activin receptor type-2 (ACVR2A or ACVR2B) in response to activin-binding at serine and threonine residues in the GS domain. Phosphorylation of ACVR1B by activin receptor type-2 regulates association with SMAD7. Post-translationally, ubiquitinated. Level of ubiquitination is regulated by the SMAD7-SMURF1 complex. In terms of processing, ubiquitinated. Expressed in many tissues, most strongly in kidney, pancreas, brain, lung, and liver.

It is found in the cell membrane. It catalyses the reaction L-threonyl-[receptor-protein] + ATP = O-phospho-L-threonyl-[receptor-protein] + ADP + H(+). The catalysed reaction is L-seryl-[receptor-protein] + ATP = O-phospho-L-seryl-[receptor-protein] + ADP + H(+). Activin receptor type-2 (ACVR2A or ACVR2B) activates the type-1 receptor through phosphorylation of its regulatory GS domain. Its function is as follows. Transmembrane serine/threonine kinase activin type-1 receptor forming an activin receptor complex with activin receptor type-2 (ACVR2A or ACVR2B). Transduces the activin signal from the cell surface to the cytoplasm and is thus regulating a many physiological and pathological processes including neuronal differentiation and neuronal survival, hair follicle development and cycling, FSH production by the pituitary gland, wound healing, extracellular matrix production, immunosuppression and carcinogenesis. Activin is also thought to have a paracrine or autocrine role in follicular development in the ovary. Within the receptor complex, type-2 receptors (ACVR2A and/or ACVR2B) act as a primary activin receptors whereas the type-1 receptors like ACVR1B act as downstream transducers of activin signals. Activin binds to type-2 receptor at the plasma membrane and activates its serine-threonine kinase. The activated receptor type-2 then phosphorylates and activates the type-1 receptor such as ACVR1B. Once activated, the type-1 receptor binds and phosphorylates the SMAD proteins SMAD2 and SMAD3, on serine residues of the C-terminal tail. Soon after their association with the activin receptor and subsequent phosphorylation, SMAD2 and SMAD3 are released into the cytoplasm where they interact with the common partner SMAD4. This SMAD complex translocates into the nucleus where it mediates activin-induced transcription. Inhibitory SMAD7, which is recruited to ACVR1B through FKBP1A, can prevent the association of SMAD2 and SMAD3 with the activin receptor complex, thereby blocking the activin signal. Activin signal transduction is also antagonized by the binding to the receptor of inhibin-B via the IGSF1 inhibin coreceptor. ACVR1B also phosphorylates TDP2. The protein is Activin receptor type-1B (ACVR1B) of Homo sapiens (Human).